A 367-amino-acid polypeptide reads, in one-letter code: Peptide chain release factor 2 (367 aa).

At Q249 the chain carries N5-methylglutamine.

This sequence belongs to the prokaryotic/mitochondrial release factor family. Post-translationally, methylated by PrmC. Methylation increases the termination efficiency of RF2.

The protein resides in the cytoplasm. Functionally, peptide chain release factor 2 directs the termination of translation in response to the peptide chain termination codons UGA and UAA. The protein is Peptide chain release factor 2 of Thermotoga sp. (strain RQ2).